The following is an 88-amino-acid chain: Kunitz-type U15-theraphotoxin-Hhn1k (88 aa).

The N-terminal stretch at 1–27 is a signal peptide; sequence MGTARFLRAVLLLSVLLMVTFPALLSA. A propeptide spanning residues 28 to 33 is cleaved from the precursor; sequence EHHDGR. The 49-residue stretch at 37–85 folds into the BPTI/Kunitz inhibitor domain; that stretch reads CRLPSDSGDCLRFFEMWCFDGTTCTKFVYGGYGGNDNRFPTEKACMKRC. Intrachain disulfides connect Cys37/Cys85 and Cys60/Cys81.

Belongs to the venom Kunitz-type family. 03 (sub-Kunitz) subfamily. Expressed by the venom gland.

It localises to the secreted. In terms of biological role, serine protease inhibitor that inhibits trypsin at a molar ratio of 1:1. This chain is Kunitz-type U15-theraphotoxin-Hhn1k, found in Cyriopagopus hainanus (Chinese bird spider).